Reading from the N-terminus, the 281-residue chain is Digeranylgeranylglyceryl phosphate synthase (281 aa).

Helical transmembrane passes span 88–108 (IALS…EFLI), 132–152 (ALVS…AGNL), 200–220 (GILV…PVIF), 225–245 (IIYL…ASAI), and 261–281 (LIKV…FRVV).

Belongs to the UbiA prenyltransferase family. DGGGP synthase subfamily. Mg(2+) is required as a cofactor.

It localises to the cell membrane. It carries out the reaction sn-3-O-(geranylgeranyl)glycerol 1-phosphate + (2E,6E,10E)-geranylgeranyl diphosphate = 2,3-bis-O-(geranylgeranyl)-sn-glycerol 1-phosphate + diphosphate. Its pathway is membrane lipid metabolism; glycerophospholipid metabolism. In terms of biological role, prenyltransferase that catalyzes the transfer of the geranylgeranyl moiety of geranylgeranyl diphosphate (GGPP) to the C2 hydroxyl of (S)-3-O-geranylgeranylglyceryl phosphate (GGGP). This reaction is the second ether-bond-formation step in the biosynthesis of archaeal membrane lipids. This chain is Digeranylgeranylglyceryl phosphate synthase, found in Korarchaeum cryptofilum (strain OPF8).